Consider the following 122-residue polypeptide: Large ribosomal subunit protein uL14 (122 aa).

This sequence belongs to the universal ribosomal protein uL14 family. In terms of assembly, part of the 50S ribosomal subunit. Forms a cluster with proteins L3 and L19. In the 70S ribosome, L14 and L19 interact and together make contacts with the 16S rRNA in bridges B5 and B8.

In terms of biological role, binds to 23S rRNA. Forms part of two intersubunit bridges in the 70S ribosome. This is Large ribosomal subunit protein uL14 from Bradyrhizobium sp. (strain BTAi1 / ATCC BAA-1182).